The following is a 65-amino-acid chain: Large ribosomal subunit protein bL35 (65 aa).

It belongs to the bacterial ribosomal protein bL35 family.

The chain is Large ribosomal subunit protein bL35 from Agathobacter rectalis (strain ATCC 33656 / DSM 3377 / JCM 17463 / KCTC 5835 / VPI 0990) (Eubacterium rectale).